A 1066-amino-acid polypeptide reads, in one-letter code: MAATVAGSGAAEVPSSLLLVVGGECGCRGLLAYVLEELERGIRSWDIDPGVCSLDEQLKVFVSRHSATFSSIVKGQRSLHHRGDTLETLVLLNPSDKSLCDELRNLLLDTASHKLLVLAGPCLEETGELLLQTGGFSPRHFLQVLGDKEIRDLLASTPPPAAPPKLTITCPTFGDWARLAPEVPGLQGVLHLRLNPPVQLPASEGLREFLEYVAESLEPPSPFELLEPPASVGLLRLARPCCYIFPGGLGDAAFFAVNGFTVLVNGGSNPKSSFWKLVRHLDRVDAVLVTHAGADSLPGLNSLLRRKLAERDEAAAGGGSGDDRLRRLISPNLGVVFLNARAAASRLVRGEDEAELALSLLSQLGITPVPLNRGPLPAEPTVLFQKMGVGRLDMYVLHPPSAATTDHTLASVCALLVWHPAGPSEKVVRVLFPGCTPPARLLDGLVHLQHLGFLREPVVTPQDMAGPRRAESKESVASRDSLRREGRTTVPSRPTQERPGVARKDSPRTEAPRRAEKEARPSREVKKDPRPSAPRTQPREVRRAASAVVSGKNVGAQVAPKTRRAPNTPRPGVPPAENGPRSPPSFRSGEASPPTEACSSPAPQLVATPSQESSLDLGLSPAGEEGGSLEEKTLELLLAASTPEPCTPSPAGAQQGPTESSGPLSLSPLRGGEPGPDASPTVTTPSLPAEVGSPHSTEVDESLSVSFEQVLPPPAAAASEAGLSLPLCGPRVRRSASPHDVDLCLVSPCEFEHRKAVPMAPAPVSPGSSNDSSARSQERAGAPGGAEETPPTSVSESLPTLSDSDPLPAAPGTADSDEDTEGFGVPRRDPLPDPLKIPPPLPTPPSICMVDPEMLPPEQARLKGGGSRTRKPLTRPSSGTTPPKATPVTAAKIKGLASGDRASRPLSARSEPSDKGNRASLSRKPSVPKTTTRGPSGSAGSRSGGSAAPPGSPVYLDLAYLPSGGSARLVDEEFFRRVRALCYVISGQDQHKEEGMRAVLDALLAGKQQWDRQLQVTLIPTFDSVAMHEWYEETHTRHQALGITVLGSNSTVSMQDEAFPACKVEF.

A necessary for the microtubule-organizing center localization region spans residues 1–804; the sequence is MAATVAGSGA…SESLPTLSDS (804 aa). A phosphoserine mark is found at S320 and S472. Residues 462–707 form a disordered region; it reads QDMAGPRRAE…EVDESLSVSF (246 aa). Basic and acidic residues-rich tracts occupy residues 466-487 and 500-530; these read GPRR…REGR and GVAR…KDPR. S582 is modified (phosphoserine). Polar residues predominate over residues 597 to 614; sequence ACSSPAPQLVATPSQESS. Phosphothreonine is present on T647. Phosphoserine occurs at positions 649, 660, 665, 667, 737, and 765. The segment covering 656-671 has biased composition (low complexity); it reads GPTESSGPLSLSPLRG. Positions 676–1066 are necessary for interaction with RASSF1; sequence PDASPTVTTP…EAFPACKVEF (391 aa). Residues 720 to 973 form a necessary for association with microtubules region; that stretch reads EAGLSLPLCG…GGSARLVDEE (254 aa). The tract at residues 758–950 is disordered; it reads PMAPAPVSPG…SRSGGSAAPP (193 aa). Polar residues-rich tracts occupy residues 766–775 and 790–803; these read PGSSNDSSAR and PPTS…TLSD. S816 bears the Phosphoserine mark. A compositionally biased stretch (pro residues) spans 832 to 845; sequence PDPLKIPPPLPTPP. Low complexity-rich tracts occupy residues 880-894 and 933-949; these read TTPP…AKIK and RGPS…SAAP. The segment at 967–1066 is necessary for association with actin; the sequence is ARLVDEEFFR…EAFPACKVEF (100 aa). The necessary for the mitochondrial aggregation and genome destruction stretch occupies residues 974–998; it reads FFRRVRALCYVISGQDQHKEEGMRA.

This sequence belongs to the MAP1 family. In terms of assembly, heterodimer of a heavy and a light chain. Interacts with microtubules and actin. Both MAP1S heavy and light chains interact with microtubules. MAP1S light chain interacts with actin. Interacts (via C-terminus) with GAN (via Kelch domains). Interacts with ESR1, LRPPRC, RASSF1, microtubules and VCY2. Interacts with ESR1, LRPPRC, RASSF1, microtubules and VCY2. Interacts with WDR47 (via N-terminus of light chain).

It is found in the nucleus. It localises to the cytoplasm. The protein resides in the cytosol. Its subcellular location is the cytoskeleton. The protein localises to the spindle. Its function is as follows. Microtubule-associated protein that mediates aggregation of mitochondria resulting in cell death and genomic destruction (MAGD). Plays a role in anchoring the microtubule organizing center to the centrosomes. Binds to DNA. Plays a role in apoptosis. Involved in the formation of microtubule bundles. The sequence is that of Microtubule-associated protein 1S (MAP1S) from Bos taurus (Bovine).